The following is a 148-amino-acid chain: Large ribosomal subunit protein uL15 (148 aa).

Over residues 1-30 the composition is skewed to basic residues; the sequence is MPSRLRKTRKLRGHVSHGHGRIGKHRKHPG. The tract at residues 1 to 37 is disordered; the sequence is MPSRLRKTRKLRGHVSHGHGRIGKHRKHPGGRGNAGG. H39 is modified ((3S)-3-hydroxyhistidine). Residues K47 and K55 each carry the N6-acetyllysine modification. Phosphoserine is present on S68. K110 carries the post-translational modification N6-acetyllysine.

The protein belongs to the universal ribosomal protein uL15 family. In terms of assembly, component of the large ribosomal subunit. Post-translationally, hydroxylated on His-39 by MINA.

It is found in the cytoplasm. Component of the large ribosomal subunit. The ribosome is a large ribonucleoprotein complex responsible for the synthesis of proteins in the cell. The polypeptide is Large ribosomal subunit protein uL15 (Rpl27a) (Rattus norvegicus (Rat)).